A 328-amino-acid chain; its full sequence is ABC transporter I family member 20 (328 aa).

Residues 14–257 (VEISGLRFTY…SKKSLMRTVE (244 aa)) enclose the ABC transporter domain. 55-62 (GSNGAGKT) is an ATP binding site. The disordered stretch occupies residues 263-295 (ERDEERKRRKERKANGLPEFETRTEESRVTGDP). Basic and acidic residues predominate over residues 282–291 (FETRTEESRV).

It belongs to the ABC transporter superfamily. ABCI family.

It localises to the cytoplasm. The protein is ABC transporter I family member 20 (ABCI20) of Arabidopsis thaliana (Mouse-ear cress).